Here is a 343-residue protein sequence, read N- to C-terminus: N-acetyl-gamma-glutamyl-phosphate reductase (343 aa).

Cysteine 146 is an active-site residue.

This sequence belongs to the NAGSA dehydrogenase family. Type 1 subfamily.

It is found in the cytoplasm. The enzyme catalyses N-acetyl-L-glutamate 5-semialdehyde + phosphate + NADP(+) = N-acetyl-L-glutamyl 5-phosphate + NADPH + H(+). Its pathway is amino-acid biosynthesis; L-arginine biosynthesis; N(2)-acetyl-L-ornithine from L-glutamate: step 3/4. Catalyzes the NADPH-dependent reduction of N-acetyl-5-glutamyl phosphate to yield N-acetyl-L-glutamate 5-semialdehyde. The chain is N-acetyl-gamma-glutamyl-phosphate reductase from Arthrobacter sp. (strain FB24).